We begin with the raw amino-acid sequence, 302 residues long: F-box protein At1g20360 (302 aa).

Residues 1-48 (MNSLPLHLLDQILFRLEPKSLAMMKSTNRTINSHISDPLFESEYFSRL) form the F-box domain.

This chain is F-box protein At1g20360, found in Arabidopsis thaliana (Mouse-ear cress).